The sequence spans 430 residues: GTPase Obg (430 aa).

The 158-residue stretch at 1–158 folds into the Obg domain; that stretch reads MFVDQVKISL…LDVSLELKLL (158 aa). Positions 118–145 are disordered; that stretch reads KGGRGGRGNSRFATPRNPAPDFSEKGEP. Residues 159–329 enclose the OBG-type G domain; that stretch reads ADVGLVGFPS…LLYAIADKLE (171 aa). Residues 165–172, 190–194, 212–215, 282–285, and 310–312 contribute to the GTP site; these read GFPSVGKS, FTTIK, DLPG, NKMD, and STI. Mg(2+)-binding residues include serine 172 and threonine 192. One can recognise an OCT domain in the interval 352-430; that stretch reads KHTPSQDKFT…ILGGEFEFVE (79 aa).

It belongs to the TRAFAC class OBG-HflX-like GTPase superfamily. OBG GTPase family. As to quaternary structure, monomer. The cofactor is Mg(2+).

Its subcellular location is the cytoplasm. An essential GTPase which binds GTP, GDP and possibly (p)ppGpp with moderate affinity, with high nucleotide exchange rates and a fairly low GTP hydrolysis rate. Plays a role in control of the cell cycle, stress response, ribosome biogenesis and in those bacteria that undergo differentiation, in morphogenesis control. This is GTPase Obg from Staphylococcus aureus (strain Mu3 / ATCC 700698).